The primary structure comprises 378 residues: RIB43A-like with coiled-coils protein 1 (378 aa).

2 coiled-coil regions span residues 153 to 250 (RMQQ…VTSD) and 279 to 334 (EQRA…CAEF).

This sequence belongs to the RIB43A family. In terms of assembly, microtubule inner protein component of sperm flagellar doublet microtubules.

The protein localises to the cytoplasm. The protein resides in the cytoskeleton. It localises to the flagellum axoneme. This Rattus norvegicus (Rat) protein is RIB43A-like with coiled-coils protein 1 (Ribc1).